Reading from the N-terminus, the 660-residue chain is Phosphatidylinositol-3-phosphate phosphatase MTMR7 (660 aa).

A Myotubularin phosphatase domain is found at 126–504; it reads GWLLVDLSEE…FTYKFWNGMY (379 aa). A 1,2-diacyl-sn-glycero-3-phospho-(1D-myo-inositol-3-phosphate) contacts are provided by Asn250, Asn275, and Ile276. The Phosphocysteine intermediate role is filled by Cys338. Positions 339, 340, 341, 342, 343, 344, and 384 each coordinate a 1,2-diacyl-sn-glycero-3-phospho-(1D-myo-inositol-3-phosphate). Residues 514 to 548 are a coiled coil; it reads RQSVTDYLMAVKEESQQLEEELESLEERLEKIQKV. Residues 550–660 are disordered; it reads LHGTKVKSKQ…DSDEAVFLTA (111 aa). Polar residues predominate over residues 566–596; it reads SGFSTSDHSTANTPQDYSGNSKSFPSRSPSQ. At Thr578 the chain carries Phosphothreonine. The segment covering 641-653 has biased composition (basic and acidic residues); sequence APSEDSGKDRDSD.

Belongs to the protein-tyrosine phosphatase family. Non-receptor class myotubularin subfamily. As to quaternary structure, heterodimer (via C-terminus) with MTMR9 (via coiled coil domain); the interaction enhances MTMR7 catalytic activity. Does not homodimerize. Interacts with RAB1B (in GDP-bound form). Highly expressed in brain (at protein level). Expressed at low levels in liver, kidney and testis.

It is found in the cytoplasm. Its subcellular location is the endomembrane system. The catalysed reaction is a 1,2-diacyl-sn-glycero-3-phospho-(1D-myo-inositol-3-phosphate) + H2O = a 1,2-diacyl-sn-glycero-3-phospho-(1D-myo-inositol) + phosphate. The enzyme catalyses 1D-myo-inositol 1,3-bisphosphate + H2O = 1D-myo-inositol 1-phosphate + phosphate. Interaction with MTMR9 increases phosphatase activity. Its function is as follows. Lipid phosphatase that specifically dephosphorylates the D-3 position of phosphatidylinositol 3-phosphate (PtdIns(3)P) and inositol 1,3-bisphosphate (Ins(1,3)P2). This Mus musculus (Mouse) protein is Phosphatidylinositol-3-phosphate phosphatase MTMR7.